Here is a 335-residue protein sequence, read N- to C-terminus: Biotin synthase (335 aa).

Positions F47 to R276 constitute a Radical SAM core domain. Residues C65, C69, and C72 each contribute to the [4Fe-4S] cluster site. Residues C109, C141, C201, and R271 each coordinate [2Fe-2S] cluster.

This sequence belongs to the radical SAM superfamily. Biotin synthase family. As to quaternary structure, homodimer. It depends on [4Fe-4S] cluster as a cofactor. [2Fe-2S] cluster is required as a cofactor.

The enzyme catalyses (4R,5S)-dethiobiotin + (sulfur carrier)-SH + 2 reduced [2Fe-2S]-[ferredoxin] + 2 S-adenosyl-L-methionine = (sulfur carrier)-H + biotin + 2 5'-deoxyadenosine + 2 L-methionine + 2 oxidized [2Fe-2S]-[ferredoxin]. The protein operates within cofactor biosynthesis; biotin biosynthesis; biotin from 7,8-diaminononanoate: step 2/2. Functionally, catalyzes the conversion of dethiobiotin (DTB) to biotin by the insertion of a sulfur atom into dethiobiotin via a radical-based mechanism. This is Biotin synthase from Bacillus subtilis subsp. natto.